A 1224-amino-acid polypeptide reads, in one-letter code: Dynactin subunit 1 (1224 aa).

Positions 1 to 10 are enriched in basic residues; the sequence is MAQSRRHPHG. Positions 1-30 are disordered; sequence MAQSRRHPHGRASSAGPRMSTEASSKPLKV. In terms of domain architecture, CAP-Gly spans 49-91; the sequence is GATLXATGKWVGVILDEAKGKNDGTVQGRKYFTCEENHGIFVR. Disordered regions lie at residues 100-217, 374-402, and 888-918; these read DGAD…RSQV, SASEKQEHVKLQKQMEKKNTELESLRQQR, and PHCHHEQDATAMQEGEYDADRPQSKPTPPAE. The span at 117 to 146 shows a compositional bias: basic residues; that stretch reads VPKRHSRXAAKGSKLRGAKPKKTTARRPKP. Residues 148-180 are compositionally biased toward low complexity; it reads RTPTSAPSSGTAGPSGSASASGGEMSSSEPSTP. Positions 205 to 540 form a coiled coil; the sequence is SPTKEEENLR…QEASAEKQQQ (336 aa). The span at 207–217 shows a compositional bias: basic and acidic residues; the sequence is TKEEENLRSQV. Coiled-coil stretches lie at residues 936-1042 and 1081-1117; these read LKLE…EGLR and KDSPLLLQQIEALQLSIRHLKNENNRLKGAQMKLELA. Residues 1203-1224 form a disordered region; that stretch reads WCSSSRARASPPASACSPPRPS. Positions 1204-1224 are enriched in low complexity; it reads CSSSRARASPPASACSPPRPS.

It belongs to the dynactin 150 kDa subunit family. As to quaternary structure, monomer and homodimer. Subunit of dynactin, a multiprotein complex part of a tripartite complex with dynein and a adapter, such as BICDL1, BICD2 or HOOK3. The dynactin complex is built around ACTR1A/ACTB filament and consists of an actin-related filament composed of a shoulder domain, a pointed end and a barbed end. Its length is defined by its flexible shoulder domain. The soulder is composed of 2 DCTN1 subunits, 4 DCTN2 and 2 DCTN3. DCTN1/p150(glued) binds directly to microtubules and to cytoplasmic dynein. Ubiquitously expressed.

It is found in the cytoplasm. The protein resides in the cytoskeleton. It localises to the microtubule organizing center. Its subcellular location is the centrosome. The protein localises to the centriole. It is found in the spindle. The protein resides in the cell cortex. Its function is as follows. Part of the dynactin complex that activates the molecular motor dynein for ultra-processive transport along microtubules. Plays a key role in dynein-mediated retrograde transport of vesicles and organelles along microtubules by recruiting and tethering dynein to microtubules. Binds to both dynein and microtubules providing a link between specific cargos, microtubules and dynein. Essential for targeting dynein to microtubule plus ends, recruiting dynein to membranous cargos and enhancing dynein processivity (the ability to move along a microtubule for a long distance without falling off the track). Can also act as a brake to slow the dynein motor during motility along the microtubule. Can regulate microtubule stability by promoting microtubule formation, nucleation and polymerization and by inhibiting microtubule catastrophe in neurons. Inhibits microtubule catastrophe by binding both to microtubules and to tubulin, leading to enhanced microtubule stability along the axon. Plays a role in metaphase spindle orientation. Plays a role in centriole cohesion and subdistal appendage organization and function. Its recruitment to the centriole in a KIF3A-dependent manner is essential for the maintenance of centriole cohesion and the formation of subdistal appendage. Also required for microtubule anchoring at the mother centriole. Plays a role in primary cilia formation. The polypeptide is Dynactin subunit 1 (DCTN1) (Gallus gallus (Chicken)).